The following is a 248-amino-acid chain: Glutathione S-transferase omega-2 (248 aa).

Positions 22-101 (GVIRIYSMRF…YLDDVYPGRK (80 aa)) constitute a GST N-terminal domain. The active-site Nucleophile is C32. Glutathione-binding positions include K59, I72, and 85-86 (ES). The 126-residue stretch at 106–231 (DPYERARQKM…VFLGFLNLYF (126 aa)) folds into the GST C-terminal domain.

This sequence belongs to the GST superfamily. Omega family.

It catalyses the reaction RX + glutathione = an S-substituted glutathione + a halide anion + H(+). The catalysed reaction is L-dehydroascorbate + 2 glutathione = glutathione disulfide + L-ascorbate. The enzyme catalyses methylarsonate + 2 glutathione + H(+) = methylarsonous acid + glutathione disulfide + H2O. In terms of biological role, exhibits glutathione-dependent thiol transferase activity. Has high dehydroascorbate reductase activity and may contribute to the recycling of ascorbic acid. Participates in the biotransformation of inorganic arsenic and reduces monomethylarsonic acid (MMA). The protein is Glutathione S-transferase omega-2 (Gsto2) of Mus musculus (Mouse).